Consider the following 361-residue polypeptide: Peptide chain release factor 1 (361 aa).

An N5-methylglutamine modification is found at Q235.

It belongs to the prokaryotic/mitochondrial release factor family. In terms of processing, methylated by PrmC. Methylation increases the termination efficiency of RF1.

The protein localises to the cytoplasm. Peptide chain release factor 1 directs the termination of translation in response to the peptide chain termination codons UAG and UAA. This chain is Peptide chain release factor 1, found in Xanthomonas campestris pv. campestris (strain B100).